A 270-amino-acid polypeptide reads, in one-letter code: Undecaprenyl-diphosphatase 1 (270 aa).

The next 7 helical transmembrane spans lie at Tyr-5 to Ile-25, Ile-42 to Ile-62, Phe-89 to Phe-109, Leu-117 to Ile-137, Phe-192 to Ile-212, Thr-220 to Leu-240, and Gly-250 to Leu-270.

Belongs to the UppP family.

It is found in the cell membrane. The catalysed reaction is di-trans,octa-cis-undecaprenyl diphosphate + H2O = di-trans,octa-cis-undecaprenyl phosphate + phosphate + H(+). Its function is as follows. Catalyzes the dephosphorylation of undecaprenyl diphosphate (UPP). Confers resistance to bacitracin. This Bacillus cereus (strain ATCC 14579 / DSM 31 / CCUG 7414 / JCM 2152 / NBRC 15305 / NCIMB 9373 / NCTC 2599 / NRRL B-3711) protein is Undecaprenyl-diphosphatase 1.